The sequence spans 355 residues: MELLKGSGLNQTESGGSSSTESSSLSGGLRFGQKIYFEDGSGSGSGSSKNRVHNTGRKSLTARCQVEGCRMDLTNAKSYYSRHKVCCIHSKSSKVIVSGLPQRFCQQCSRFHLLSEFDLEKRSCRRRLACHNERRRKPQATTSLLSSRYARTAPSLYGNANSAMIRSVLGDPTAWATARSAMRWSGPERESHQVMNVFSSHGSSSFTTTCPEMMMNNNGTDSSCALSLLSNTNPNQQLQQHQLQTPTNVWRPSSGFNPVIADRVTMAQPPPVSIHNQYLNNQTWEFTTGEKSNLQYMSPVLGPSQISQPADFQISNGSTMGGFELSHHQQVLRQYMEPENTRAYDSSPQHFNWSL.

The interval 1–27 (MELLKGSGLNQTESGGSSSTESSSLSG) is disordered. Low complexity predominate over residues 12 to 27 (TESGGSSSTESSSLSG). An SBP-type zinc finger spans residues 61–138 (TARCQVEGCR…ACHNERRRKP (78 aa)). Residues C64, C69, C86, H89, C105, C108, H112, and C124 each contribute to the Zn(2+) site. The Bipartite nuclear localization signal motif lies at 121–137 (KRSCRRRLACHNERRRK).

It localises to the nucleus. Probable transcription factor required for the flowering response to vernalization in the shoot apical meristem (SAM). Defines the competence of shoot meristems to flower in response to vernalization in perennials. The protein is Squamosa promoter-binding protein-like 15 of Arabis alpina (Alpine rock-cress).